Here is a 270-residue protein sequence, read N- to C-terminus: MAAWGERLAGVRGVLLDISGVLYDGGEGGGAAIAGSVEAVARLKRSRLKVRFCTNESQKSRADLVGLLRRLGFDVSEGEVTAPAPAACLILKQRGLRPHLLVHDGVRSEFDQIDTSNPNCVVIADAGEGFSYQNMNKAFQVLMELENPVLFSLGKGRYYKETSGLMLDVGPYMKALEYACGIEAEVVGKPSPEFFKSALQEMGVEAHEAIMIGDDIVGDVGGAQRYGMRALQVRTGKFRPSDEHHPEVKADGYVDNLAEAVDLLLQHADK.

Residues Asp17 and Ser19 each coordinate Mg(2+). Substrate is bound by residues Asp17–Ser19, Thr54–Asn55, and Lys189. Asp214 lines the Mg(2+) pocket.

It belongs to the HAD-like hydrolase superfamily. In terms of assembly, homodimer. The cofactor is Mg(2+). As to expression, detected in liver (at protein level).

The protein resides in the cytoplasm. The protein localises to the nucleus. The catalysed reaction is diphosphate + H2O = 2 phosphate + H(+). Its function is as follows. Phosphatase that hydrolyzes imidodiphosphate, 3-phosphohistidine and 6-phospholysine. Has broad substrate specificity and can also hydrolyze inorganic diphosphate, but with lower efficiency. This Bos taurus (Bovine) protein is Phospholysine phosphohistidine inorganic pyrophosphate phosphatase (LHPP).